A 242-amino-acid polypeptide reads, in one-letter code: Ditrans,polycis-undecaprenyl-diphosphate synthase ((2E,6E)-farnesyl-diphosphate specific) (242 aa).

The active site involves Asp21. Position 21 (Asp21) interacts with Mg(2+). Substrate contacts are provided by residues 22–25, Trp26, Arg34, His38, and 66–68; these read GNGR and SSE. The active-site Proton acceptor is the Asn69. Substrate is bound by residues Trp70, Arg72, Arg189, and 195-197; that span reads RIS. Residue Glu208 participates in Mg(2+) binding.

It belongs to the UPP synthase family. As to quaternary structure, homodimer. The cofactor is Mg(2+).

It catalyses the reaction 8 isopentenyl diphosphate + (2E,6E)-farnesyl diphosphate = di-trans,octa-cis-undecaprenyl diphosphate + 8 diphosphate. Catalyzes the sequential condensation of isopentenyl diphosphate (IPP) with (2E,6E)-farnesyl diphosphate (E,E-FPP) to yield (2Z,6Z,10Z,14Z,18Z,22Z,26Z,30Z,34E,38E)-undecaprenyl diphosphate (di-trans,octa-cis-UPP). UPP is the precursor of glycosyl carrier lipid in the biosynthesis of bacterial cell wall polysaccharide components such as peptidoglycan and lipopolysaccharide. The sequence is that of Ditrans,polycis-undecaprenyl-diphosphate synthase ((2E,6E)-farnesyl-diphosphate specific) from Haemophilus ducreyi (strain 35000HP / ATCC 700724).